We begin with the raw amino-acid sequence, 213 residues long: MRSKYIVIEGLEGAGKTTARNVVVETLEQLGIRDMVFTREPGGTQLAEKLRSLVLDIKSVGDEVITDKAEVLMFYAARVQLVETVIKPALANGTWVIGDRHDLSTQAYQGGGRGIDQHMLATLRDAVLGDFRPDLTLYLDVTPEVGLKRARARGELDRIEQESFDFFNRTRARYLELAAQDKSIHTIDATQPLEAVMDAIRTTVTHWVKELDA.

Residue 10–17 (GLEGAGKT) coordinates ATP.

This sequence belongs to the thymidylate kinase family.

The enzyme catalyses dTMP + ATP = dTDP + ADP. Phosphorylation of dTMP to form dTDP in both de novo and salvage pathways of dTTP synthesis. This is Thymidylate kinase from Shigella boydii serotype 18 (strain CDC 3083-94 / BS512).